The primary structure comprises 683 residues: U4/U6 small nuclear ribonucleoprotein Prp3 (683 aa).

In terms of domain architecture, PWI spans 1–87; it reads MALSKRELDE…HSKSSSDRSR (87 aa). Residues 73-107 are compositionally biased toward basic and acidic residues; sequence GRSSRHSKSSSDRSRKRDLKEVFGDDSEISKESSG. Positions 73 to 135 are disordered; sequence GRSSRHSKSS…IPGPPSESPG (63 aa). Residue lysine 139 forms a Glycyl lysine isopeptide (Lys-Gly) (interchain with G-Cter in SUMO2) linkage. Residues 153 to 183 form a disordered region; it reads IEERKKQLSFISPPTPQPKTPSSSQPERLPI. Serine 164 is subject to Phosphoserine. Position 167 is a phosphothreonine (threonine 167). Residues lysine 244 and lysine 252 each participate in a glycyl lysine isopeptide (Lys-Gly) (interchain with G-Cter in SUMO2) cross-link. Residues 416-550 form a mediates interaction with SART3 region; the sequence is NLVEHPAQLN…VHISVYRVRN (135 aa). Serine 619 is modified (phosphoserine).

As to quaternary structure, component of the precatalytic spliceosome (spliceosome B complex). Component of the U4/U6-U5 tri-snRNP complex, a building block of the precatalytic spliceosome (spliceosome B complex). The U4/U6-U5 tri-snRNP complex is composed of the U4, U6 and U5 snRNAs and at least PRPF3, PRPF4, PRPF6, PRPF8, PRPF31, SNRNP200, TXNL4A, SNRNP40, SNRPB, SNRPD1, SNRPD2, SNRPD3, SNRPE, SNRPF, SNRPG, DDX23, CD2BP2, PPIH, SNU13, EFTUD2, SART1 and USP39, plus LSM2, LSM3, LSM4, LSM5, LSM6, LSM7 and LSM8. Interacts directly with PRPF4. Part of a heteromeric complex containing PPIH, PRPF3 and PRPF4 that is stable in the absence of RNA. Interacts with SART3; the interaction is direct and recruits the deubiquitinase USP4 to PRPF3. Interacts with PRPF19. Interacts ('Lys-63'-linked polyubiquitinated) with PRPF8 (via the MPN (JAB/Mov34) domain); may stabilize the U4/U6-U5 tri-snRNP complex. Interacts with ERCC6. Ubiquitinated. Undergoes 'Lys-63'-linked polyubiquitination by PRPF19 and deubiquitination by USP4. 'Lys-63'-linked ubiquitination increases the affinity for PRPF8 and may regulate the assembly of the U4/U6-U5 tri-snRNP complex.

It localises to the nucleus. The protein localises to the nucleus speckle. Functionally, plays a role in pre-mRNA splicing as component of the U4/U6-U5 tri-snRNP complex that is involved in spliceosome assembly, and as component of the precatalytic spliceosome (spliceosome B complex). The protein is U4/U6 small nuclear ribonucleoprotein Prp3 (PRPF3) of Bos taurus (Bovine).